The chain runs to 583 residues: Mitogen-activated protein kinase 4 (583 aa).

The 293-residue stretch at 20–312 (FIDFQPLGFG…AEMGLQHPYM (293 aa)) folds into the Protein kinase domain. ATP-binding positions include 26–34 (LGFGVNGLV) and lysine 49. Catalysis depends on aspartate 149, which acts as the Proton acceptor. Serine 186 carries the post-translational modification Phosphoserine; by PAK1, PAK2 and PAK3. The SEG motif motif lies at 186–188 (SEG). An FRIEDE motif motif is present at residues 328-333 (FRIEDE). Basic and acidic residues-rich tracts occupy residues 366-379 (DRCQDASEVQRDPR) and 391-410 (VDPRKDSQSSSERFLEQSHS). A disordered region spans residues 366–410 (DRCQDASEVQRDPRAGSTPLAEDVQVDPRKDSQSSSERFLEQSHS). Position 430 is a phosphoserine (serine 430). A disordered region spans residues 495 to 531 (STQSGSERASPPPDAPEPRLSASPPGHPTPIDGGASP).

The protein belongs to the protein kinase superfamily. CMGC Ser/Thr protein kinase family. MAP kinase subfamily. In terms of assembly, homodimer. Heterodimer with ERK3/MAPK6. Interacts with (via FRIEDE motif) MAPKAPK5. Mg(2+) serves as cofactor. In terms of processing, phosphorylated at Ser-186 by PAK1, PAK2 and PAK3 resulting in catalytic activation. Phosphorylated by MAPKAPK5 at other sites.

It is found in the cytoplasm. Its subcellular location is the nucleus. The catalysed reaction is L-seryl-[protein] + ATP = O-phospho-L-seryl-[protein] + ADP + H(+). It carries out the reaction L-threonyl-[protein] + ATP = O-phospho-L-threonyl-[protein] + ADP + H(+). Activated by phosphorylation at Ser-186. Functionally, atypical MAPK protein. Phosphorylates microtubule-associated protein 2 (MAP2) and MAPKAPK5. The precise role of the complex formed with MAPKAPK5 is still unclear, but the complex follows a complex set of phosphorylation events: upon interaction with atypical MAPKAPK5, ERK4/MAPK4 is phosphorylated at Ser-186 and then mediates phosphorylation and activation of MAPKAPK5, which in turn phosphorylates ERK4/MAPK4. May promote entry in the cell cycle. The polypeptide is Mitogen-activated protein kinase 4 (Mapk4) (Mus musculus (Mouse)).